Here is an 881-residue protein sequence, read N- to C-terminus: Low-affinity phosphate transporter PHO90 (881 aa).

The SPX domain occupies 1 to 288 (MRFSHFLKYN…HLNTRTELIE (288 aa)). 12 helical membrane passes run 417-437 (IYFIILVTGLLLGIKTFNDAA), 456-476 (AIPLHITAFLVPLLVVLFKVL), 493-513 (ILAAMWSSTIMILLAGFTLGE), 514-534 (VLAQYNIAKVLASWLLAFAGC), 539-559 (VLLMAMCVVFFLSMWISNVAA), 581-601 (AQALVLGVALAANIGGMSSPI), 663-683 (FTVKQYYIITVTVATILLWCV), 691-711 (FGSSGQIAIIPIVLFFGTGLL), 718-738 (AFPWSIVILAMGGIALGKAVS), 758-778 (GVFAILCIFGILMLVVGTFVS), 805-825 (ILVFGCALLSSCGMGLASSGF), and 854-874 (ASILAFLCVITLGYGIMASVV).

This sequence belongs to the CitM (TC 2.A.11) transporter family.

Its subcellular location is the membrane. In terms of biological role, low-affinity phosphate transporter involved in the control of cellular phosphate levels. This chain is Low-affinity phosphate transporter PHO90 (PHO90), found in Saccharomyces cerevisiae (strain ATCC 204508 / S288c) (Baker's yeast).